Here is a 459-residue protein sequence, read N- to C-terminus: Paired box protein Pax-8 (459 aa).

Positions 9–135 form a DNA-binding region, paired; sequence GHGGLNQLGG…SSINRIIRTK (127 aa). A PAI subdomain region spans residues 12-68; it reads GLNQLGGAFVNGRPLPEVVRQRIVDLAHQGVRPCDISRQLRVSHGCVSKILGRYYET. The RED subdomain stretch occupies residues 87–135; sequence KVVEKIGDYKRQNPTMFAWEIRDRLLAEGVCDNDTVPSVSSINRIIRTK. Residues 159-182 show a composition bias toward polar residues; it reads LIPSSAVTPPESPQSDSLGSTYSI. Residues 159–223 form a disordered region; sequence LIPSSAVTPP…QSSSSGPRKH (65 aa). Serine 305 bears the Phosphoserine mark.

Interacts with WWTR1.

The protein localises to the nucleus. Functionally, thought to encode a transcription factor. It may have a role in kidney cell differentiation. May play a regulatory role in mammalian development. The chain is Paired box protein Pax-8 (PAX8) from Canis lupus familiaris (Dog).